A 270-amino-acid chain; its full sequence is Bark lectin (270 aa).

An N-terminal signal peptide occupies residues 1–15 (ISITFFLLLLNKVNS). Residues Asn60, Asn76, and Asn127 are each glycosylated (N-linked (GlcNAc...) asparagine). Residues Glu141 and Asp143 each coordinate Mn(2+). Asp143, His145, Asn147, and Asp150 together coordinate Ca(2+). Asp150 and His155 together coordinate Mn(2+). A glycan (N-linked (GlcNAc...) asparagine) is linked at Asn201.

It belongs to the leguminous lectin family.

GalNAc-specific lectin. This Styphnolobium japonicum (Japanese pagoda tree) protein is Bark lectin.